The primary structure comprises 181 residues: RNA pyrophosphohydrolase (181 aa).

The region spanning Gly6–Gln149 is the Nudix hydrolase domain. The short motif at Gly38 to Gly59 is the Nudix box element. The interval Gly159–Ala181 is disordered. Over residues Arg168–Ala181 the composition is skewed to basic residues.

It belongs to the Nudix hydrolase family. RppH subfamily. A divalent metal cation serves as cofactor.

In terms of biological role, accelerates the degradation of transcripts by removing pyrophosphate from the 5'-end of triphosphorylated RNA, leading to a more labile monophosphorylated state that can stimulate subsequent ribonuclease cleavage. The polypeptide is RNA pyrophosphohydrolase (Alkalilimnicola ehrlichii (strain ATCC BAA-1101 / DSM 17681 / MLHE-1)).